We begin with the raw amino-acid sequence, 155 residues long: 17.3 kDa class II heat shock protein (155 aa).

Positions 39 to 155 constitute a sHSP domain; that stretch reads DAKAMAATPA…KPKTIEVKVA (117 aa).

This sequence belongs to the small heat shock protein (HSP20) family.

It is found in the cytoplasm. The chain is 17.3 kDa class II heat shock protein from Solanum peruvianum (Peruvian tomato).